Here is a 376-residue protein sequence, read N- to C-terminus: N-acetyldiaminopimelate deacetylase (376 aa).

The active site involves Asp-70. Glu-129 serves as the catalytic Proton acceptor.

It belongs to the peptidase M20A family. N-acetyldiaminopimelate deacetylase subfamily.

The enzyme catalyses N-acetyl-(2S,6S)-2,6-diaminopimelate + H2O = (2S,6S)-2,6-diaminopimelate + acetate. It functions in the pathway amino-acid biosynthesis; L-lysine biosynthesis via DAP pathway; LL-2,6-diaminopimelate from (S)-tetrahydrodipicolinate (acetylase route): step 3/3. Its function is as follows. Catalyzes the conversion of N-acetyl-diaminopimelate to diaminopimelate and acetate. The chain is N-acetyldiaminopimelate deacetylase from Bacillus pumilus (strain SAFR-032).